Reading from the N-terminus, the 127-residue chain is Small ribosomal subunit protein uS11 (127 aa).

It belongs to the universal ribosomal protein uS11 family. In terms of assembly, part of the 30S ribosomal subunit. Interacts with proteins S7 and S18. Binds to IF-3.

Located on the platform of the 30S subunit, it bridges several disparate RNA helices of the 16S rRNA. Forms part of the Shine-Dalgarno cleft in the 70S ribosome. The chain is Small ribosomal subunit protein uS11 from Ehrlichia ruminantium (strain Gardel).